Reading from the N-terminus, the 83-residue chain is Non-muscle caldesmon (83 aa).

2 stretches are compositionally biased toward basic and acidic residues: residues glutamine 1–lysine 44 and asparagine 62–lysine 76. Residues glutamine 1–glutamine 63 are myosin and calmodulin-binding. A disordered region spans residues glutamine 1–leucine 83.

Post-translationally, in non-muscle cells, phosphorylation by CDC2 during mitosis causes caldesmon to dissociate from microfilaments. Phosphorylation reduces caldesmon binding to actin, myosin, and calmodulin as well as its inhibition of actomyosin ATPase activity. Phosphorylation also occurs in both quiescent and dividing smooth muscle cells with similar effects on the interaction with actin and calmodulin and on microfilaments reorganization.

Its subcellular location is the cytoplasm. The protein resides in the cytoskeleton. The protein localises to the myofibril. It is found in the stress fiber. Actin- and myosin-binding protein implicated in the regulation of actomyosin interactions in smooth muscle and nonmuscle cells (could act as a bridge between myosin and actin filaments). Stimulates actin binding of tropomyosin which increases the stabilization of actin filament structure. In muscle tissues, inhibits the actomyosin ATPase by binding to F-actin. This inhibition is attenuated by calcium-calmodulin and is potentiated by tropomyosin. Interacts with actin, myosin, two molecules of tropomyosin and with calmodulin. Also plays an essential role during cellular mitosis and receptor capping. The protein is Non-muscle caldesmon (CALD1) of Bos taurus (Bovine).